We begin with the raw amino-acid sequence, 692 residues long: Elongation factor G (692 aa).

The 275-residue stretch at 8–282 (ENTRNIGIMA…GVVDYLPSPV (275 aa)) folds into the tr-type G domain. GTP-binding positions include 17-24 (AHIDAGKT), 81-85 (DTPGH), and 135-138 (NKMD).

The protein belongs to the TRAFAC class translation factor GTPase superfamily. Classic translation factor GTPase family. EF-G/EF-2 subfamily.

The protein localises to the cytoplasm. Its function is as follows. Catalyzes the GTP-dependent ribosomal translocation step during translation elongation. During this step, the ribosome changes from the pre-translocational (PRE) to the post-translocational (POST) state as the newly formed A-site-bound peptidyl-tRNA and P-site-bound deacylated tRNA move to the P and E sites, respectively. Catalyzes the coordinated movement of the two tRNA molecules, the mRNA and conformational changes in the ribosome. The chain is Elongation factor G from Anoxybacillus flavithermus (strain DSM 21510 / WK1).